The chain runs to 50 residues: Large ribosomal subunit protein bL32c (50 aa).

This sequence belongs to the bacterial ribosomal protein bL32 family.

Its subcellular location is the plastid. The protein localises to the chloroplast. In Lotus japonicus (Lotus corniculatus var. japonicus), this protein is Large ribosomal subunit protein bL32c.